Consider the following 331-residue polypeptide: Adenosine deaminase (331 aa).

Positions 12 and 14 each coordinate Zn(2+). Substrate-binding residues include His14, Asp16, and Gly170. His197 is a Zn(2+) binding site. The Proton donor role is filled by Glu200. A Zn(2+)-binding site is contributed by Asp278. Asp279 serves as a coordination point for substrate.

It belongs to the metallo-dependent hydrolases superfamily. Adenosine and AMP deaminases family. Adenosine deaminase subfamily. Requires Zn(2+) as cofactor.

It carries out the reaction adenosine + H2O + H(+) = inosine + NH4(+). The enzyme catalyses 2'-deoxyadenosine + H2O + H(+) = 2'-deoxyinosine + NH4(+). In terms of biological role, catalyzes the hydrolytic deamination of adenosine and 2-deoxyadenosine. The sequence is that of Adenosine deaminase from Shewanella sp. (strain W3-18-1).